Here is a 289-residue protein sequence, read N- to C-terminus: Syntaxin-3 (289 aa).

Residues M1–K263 are Cytoplasmic-facing. The stretch at M32–A111 forms a coiled coil. In terms of domain architecture, t-SNARE coiled-coil homology spans L191–A253. A helical; Anchor for type IV membrane protein transmembrane segment spans residues L264 to L284. The Extracellular segment spans residues S285–K289.

Belongs to the syntaxin family. In terms of assembly, interacts with REEP6. Interacts with PRPH2 in rod and cone photoreceptors. Interacts with ROM1. Interacts with SNAP25. Interacts with VAMP2. As to expression, heart, spleen, lung and kidney.

It is found in the membrane. Its function is as follows. Potentially involved in docking of synaptic vesicles at presynaptic active zones. Apical receptor involved in membrane fusion of apical vesicles. Essential for survival of retinal photoreceetors. In Rattus norvegicus (Rat), this protein is Syntaxin-3 (Stx3).